A 289-amino-acid chain; its full sequence is 4-diphosphocytidyl-2-C-methyl-D-erythritol kinase (289 aa).

Lys-10 is a catalytic residue. 94–104 is a binding site for ATP; the sequence is PVAAGLAGGSS. Asp-136 is an active-site residue.

This sequence belongs to the GHMP kinase family. IspE subfamily.

The catalysed reaction is 4-CDP-2-C-methyl-D-erythritol + ATP = 4-CDP-2-C-methyl-D-erythritol 2-phosphate + ADP + H(+). The protein operates within isoprenoid biosynthesis; isopentenyl diphosphate biosynthesis via DXP pathway; isopentenyl diphosphate from 1-deoxy-D-xylulose 5-phosphate: step 3/6. Catalyzes the phosphorylation of the position 2 hydroxy group of 4-diphosphocytidyl-2C-methyl-D-erythritol. The polypeptide is 4-diphosphocytidyl-2-C-methyl-D-erythritol kinase (Bacillus cereus (strain G9842)).